We begin with the raw amino-acid sequence, 441 residues long: Putative cytochrome P450 138 (441 aa).

C388 lines the heme pocket.

This sequence belongs to the cytochrome P450 family. It depends on heme as a cofactor.

The protein is Putative cytochrome P450 138 (cyp138) of Mycobacterium bovis (strain ATCC BAA-935 / AF2122/97).